The following is a 59-amino-acid chain: Dendroaspin (59 aa).

Intrachain disulfides connect Cys3/Cys22, Cys17/Cys37, Cys39/Cys51, and Cys52/Cys57. Residues 43–45 (RGD) carry the Cell attachment site motif.

This sequence belongs to the three-finger toxin family. Short-chain subfamily. Antiplatelet toxin sub-subfamily. Expressed by the venom gland.

Its subcellular location is the secreted. Inhibits ADP-induced platelet aggregation and inhibits the binding of purified platelet fibrinogen receptor alpha-IIb/beta-3 (ITGA2B/ITGB3) to immobilized fibrinogen. Has also been described to inhibit cell adhesion to fibrinogen, fibronectin, laminin and collagen. This is Dendroaspin from Dendroaspis jamesoni kaimosae (Eastern Jameson's mamba).